Consider the following 391-residue polypeptide: GTPase Obg (391 aa).

Positions 1–159 (MKFVDEAVVK…REIRLELLLL (159 aa)) constitute an Obg domain. An OBG-type G domain is found at 160-333 (ADVGMLGLPN…LCYKLADFME (174 aa)). GTP-binding positions include 166-173 (GLPNAGKS), 191-195 (FTTLI), 213-216 (DIPG), 283-286 (NKTD), and 314-316 (SAI). 2 residues coordinate Mg(2+): Ser173 and Thr193. Over residues 367–383 (TEEDDDDWDDCDDEDDD) the composition is skewed to acidic residues. The disordered stretch occupies residues 367–391 (TEEDDDDWDDCDDEDDDGHVVYVRD).

This sequence belongs to the TRAFAC class OBG-HflX-like GTPase superfamily. OBG GTPase family. As to quaternary structure, monomer. Mg(2+) serves as cofactor.

The protein localises to the cytoplasm. In terms of biological role, an essential GTPase which binds GTP, GDP and possibly (p)ppGpp with moderate affinity, with high nucleotide exchange rates and a fairly low GTP hydrolysis rate. Plays a role in control of the cell cycle, stress response, ribosome biogenesis and in those bacteria that undergo differentiation, in morphogenesis control. The sequence is that of GTPase Obg from Vibrio campbellii (strain ATCC BAA-1116).